The chain runs to 130 residues: Ribosome-binding factor A (130 aa).

Belongs to the RbfA family. In terms of assembly, monomer. Binds 30S ribosomal subunits, but not 50S ribosomal subunits or 70S ribosomes.

It localises to the cytoplasm. In terms of biological role, one of several proteins that assist in the late maturation steps of the functional core of the 30S ribosomal subunit. Associates with free 30S ribosomal subunits (but not with 30S subunits that are part of 70S ribosomes or polysomes). Required for efficient processing of 16S rRNA. May interact with the 5'-terminal helix region of 16S rRNA. The protein is Ribosome-binding factor A of Roseiflexus sp. (strain RS-1).